Reading from the N-terminus, the 67-residue chain is Large ribosomal subunit protein uL29 (67 aa).

The protein belongs to the universal ribosomal protein uL29 family.

This chain is Large ribosomal subunit protein uL29, found in Pelotomaculum thermopropionicum (strain DSM 13744 / JCM 10971 / SI).